The following is a 157-amino-acid chain: Endoribonuclease YbeY (157 aa).

The Zn(2+) site is built by His-114, His-118, and His-124.

The protein belongs to the endoribonuclease YbeY family. Zn(2+) serves as cofactor.

It is found in the cytoplasm. Functionally, single strand-specific metallo-endoribonuclease involved in late-stage 70S ribosome quality control and in maturation of the 3' terminus of the 16S rRNA. This Salmonella agona (strain SL483) protein is Endoribonuclease YbeY.